The following is a 418-amino-acid chain: Queuine tRNA-ribosyltransferase accessory subunit 2 (418 aa).

4 residues coordinate Zn(2+): cysteine 325, cysteine 327, cysteine 330, and histidine 356.

The protein belongs to the queuine tRNA-ribosyltransferase family. QTRT2 subfamily. As to quaternary structure, heterodimer of a catalytic subunit and an accessory subunit. Requires Zn(2+) as cofactor.

The protein localises to the cytoplasm. In terms of biological role, non-catalytic subunit of the queuine tRNA-ribosyltransferase (TGT) that catalyzes the base-exchange of a guanine (G) residue with queuine (Q) at position 34 (anticodon wobble position) in tRNAs with GU(N) anticodons (tRNA-Asp, -Asn, -His and -Tyr), resulting in the hypermodified nucleoside queuosine (7-(((4,5-cis-dihydroxy-2-cyclopenten-1-yl)amino)methyl)-7-deazaguanosine). This Drosophila sechellia (Fruit fly) protein is Queuine tRNA-ribosyltransferase accessory subunit 2.